A 396-amino-acid polypeptide reads, in one-letter code: Putative glycosyltransferase HOC1 (396 aa).

The Cytoplasmic portion of the chain corresponds to 2-13 (AKTTKRASSFRR). Residues 14–34 (LMIFAIIALISLAFGVRYLFH) traverse the membrane as a helical; Signal-anchor for type II membrane protein segment. Over 35-396 (NSNATDLQKI…WKNTPKVEQK (362 aa)) the chain is Lumenal. N-linked (GlcNAc...) asparagine glycosylation is present at Asn37.

This sequence belongs to the glycosyltransferase 32 family. As to quaternary structure, component of the M-Pol II complex composed of ANP1, MNN9, MNN10, MNN11 and HOC1.

It localises to the golgi apparatus. The protein resides in the cis-Golgi network membrane. In terms of biological role, the M-Pol II complex possesses alpha-1,6-mannosyltransferase activity and is probably involved in the elongation of the mannan backbone of N-linked glycans on cell wall and periplasmic proteins. In Saccharomyces cerevisiae (strain ATCC 204508 / S288c) (Baker's yeast), this protein is Putative glycosyltransferase HOC1 (HOC1).